The primary structure comprises 438 residues: 26S proteasome regulatory subunit 6A (438 aa).

The segment at 1-24 (MSTLEELDALDQSQQGGSSNNEGL) is disordered. Polar residues predominate over residues 11–22 (DQSQQGGSSNNE). 226 to 233 (GPPGTGKT) is a binding site for ATP.

It belongs to the AAA ATPase family.

It localises to the cytoplasm. The protein resides in the nucleus. In terms of biological role, the 26S proteasome is involved in the ATP-dependent degradation of ubiquitinated proteins. The regulatory (or ATPase) complex confers ATP dependency and substrate specificity to the 26S complex. This Schizosaccharomyces pombe (strain 972 / ATCC 24843) (Fission yeast) protein is 26S proteasome regulatory subunit 6A (tbp1).